Consider the following 489-residue polypeptide: Phosphoenolpyruvate carboxykinase (ATP) (489 aa).

The substrate site is built by Arg53 and Tyr159. Residues His185, Gly208–Thr216, Asp258, Arg300, Lys409–Ile410, and Ser415 each bind ATP. Arg300 is a binding site for substrate.

It belongs to the phosphoenolpyruvate carboxykinase (ATP) family.

It is found in the cytoplasm. It catalyses the reaction oxaloacetate + ATP = phosphoenolpyruvate + ADP + CO2. The protein operates within carbohydrate biosynthesis; gluconeogenesis. In terms of biological role, involved in the gluconeogenesis. Catalyzes the conversion of oxaloacetate (OAA) to phosphoenolpyruvate (PEP) through direct phosphoryl transfer between the nucleoside triphosphate and OAA. The polypeptide is Phosphoenolpyruvate carboxykinase (ATP) (Aeropyrum pernix (strain ATCC 700893 / DSM 11879 / JCM 9820 / NBRC 100138 / K1)).